A 451-amino-acid chain; its full sequence is Serine--tRNA ligase, cytoplasmic (451 aa).

An L-serine-binding site is contributed by 236-238 (TSE). ATP-binding positions include 267 to 269 (RKE) and V283. E290 is a binding site for L-serine. 354-357 (ELVS) contacts ATP. T392 contributes to the L-serine binding site.

It belongs to the class-II aminoacyl-tRNA synthetase family. Type-1 seryl-tRNA synthetase subfamily. In terms of assembly, homodimer. The tRNA molecule binds across the dimer.

The protein localises to the cytoplasm. The catalysed reaction is tRNA(Ser) + L-serine + ATP = L-seryl-tRNA(Ser) + AMP + diphosphate + H(+). It catalyses the reaction tRNA(Sec) + L-serine + ATP = L-seryl-tRNA(Sec) + AMP + diphosphate + H(+). Its pathway is aminoacyl-tRNA biosynthesis; selenocysteinyl-tRNA(Sec) biosynthesis; L-seryl-tRNA(Sec) from L-serine and tRNA(Sec): step 1/1. Its function is as follows. Catalyzes the attachment of serine to tRNA(Ser). Is also able to aminoacylate tRNA(Sec) with serine, to form the misacylated tRNA L-seryl-tRNA(Sec), which will be further converted into selenocysteinyl-tRNA(Sec). The protein is Serine--tRNA ligase, cytoplasmic (serS) of Dictyostelium discoideum (Social amoeba).